Consider the following 185-residue polypeptide: Probable prefoldin subunit 3 (185 aa).

Belongs to the prefoldin subunit alpha family. As to quaternary structure, heterohexamer of two PFD-alpha type and four PFD-beta type subunits.

Functionally, binds specifically to cytosolic chaperonin (c-CPN) and transfers target proteins to it. Binds to nascent polypeptide chain and promotes folding in an environment in which there are many competing pathways for nonnative proteins. The polypeptide is Probable prefoldin subunit 3 (pfd-3) (Caenorhabditis elegans).